A 76-amino-acid polypeptide reads, in one-letter code: Acyl carrier protein (76 aa).

Residues Met1–Gln76 enclose the Carrier domain. O-(pantetheine 4'-phosphoryl)serine is present on Ser36.

Belongs to the acyl carrier protein (ACP) family. In terms of processing, 4'-phosphopantetheine is transferred from CoA to a specific serine of apo-ACP by AcpS. This modification is essential for activity because fatty acids are bound in thioester linkage to the sulfhydryl of the prosthetic group.

The protein localises to the cytoplasm. Its pathway is lipid metabolism; fatty acid biosynthesis. Carrier of the growing fatty acid chain in fatty acid biosynthesis. The sequence is that of Acyl carrier protein from Actinobacillus succinogenes (strain ATCC 55618 / DSM 22257 / CCUG 43843 / 130Z).